A 672-amino-acid chain; its full sequence is APC membrane recruitment protein 2 (672 aa).

A compositionally biased stretch (gly residues) spans Met1–Arg21. Disordered regions lie at residues Met1–Gly23, Thr74–Ala360, and Met443–Cys560. The span at Gly142–Leu158 shows a compositional bias: low complexity. Position 154 is a phosphoserine (Ser154). Composition is skewed to basic and acidic residues over residues Gly163 to Ala175 and Arg201 to Val210. Ser223, Ser227, and Ser244 each carry phosphoserine. Over residues Cys230–Ala254 the composition is skewed to basic and acidic residues. Residues Gly255–Ser269 show a composition bias toward low complexity. Ser284 carries the post-translational modification Phosphoserine. Positions Ser289–Pro303 are enriched in basic and acidic residues. A compositionally biased stretch (low complexity) spans Ala343–Pro354. Residues Ser356 and Ser359 each carry the phosphoserine modification. Low complexity predominate over residues Gln446 to Gly457. Composition is skewed to basic and acidic residues over residues Arg478–Ser488 and Gln502–Glu516.

It belongs to the Amer family. In terms of assembly, interacts with APC.

It is found in the cell membrane. In terms of biological role, negative regulator of the canonical Wnt signaling pathway involved in neuroectodermal patterning. Acts by specifically binding phosphatidylinositol 4,5-bisphosphate (PtdIns(4,5)P2), translocating to the cell membrane and interacting with key regulators of the canonical Wnt signaling pathway, such as components of the beta-catenin destruction complex. The chain is APC membrane recruitment protein 2 (Amer2) from Mus musculus (Mouse).